We begin with the raw amino-acid sequence, 376 residues long: Erythronate-4-phosphate dehydrogenase (376 aa).

Positions 45 and 67 each coordinate substrate. Residue Asp-147 coordinates NAD(+). Arg-209 is an active-site residue. Asp-233 is an NAD(+) binding site. The active site involves Glu-238. Residue His-255 is the Proton donor of the active site. NAD(+) is bound at residue Gly-258. Tyr-259 contributes to the substrate binding site.

Belongs to the D-isomer specific 2-hydroxyacid dehydrogenase family. PdxB subfamily. Homodimer.

The protein resides in the cytoplasm. The enzyme catalyses 4-phospho-D-erythronate + NAD(+) = (R)-3-hydroxy-2-oxo-4-phosphooxybutanoate + NADH + H(+). It functions in the pathway cofactor biosynthesis; pyridoxine 5'-phosphate biosynthesis; pyridoxine 5'-phosphate from D-erythrose 4-phosphate: step 2/5. Its function is as follows. Catalyzes the oxidation of erythronate-4-phosphate to 3-hydroxy-2-oxo-4-phosphonooxybutanoate. The chain is Erythronate-4-phosphate dehydrogenase from Shewanella baltica (strain OS155 / ATCC BAA-1091).